The following is a 636-amino-acid chain: Biosynthetic arginine decarboxylase (636 aa).

Lys101 is modified (N6-(pyridoxal phosphate)lysine). 286–296 (FDVGGGLAVDY) is a binding site for substrate.

Belongs to the Orn/Lys/Arg decarboxylase class-II family. SpeA subfamily. Mg(2+) is required as a cofactor. It depends on pyridoxal 5'-phosphate as a cofactor.

The catalysed reaction is L-arginine + H(+) = agmatine + CO2. It functions in the pathway amine and polyamine biosynthesis; agmatine biosynthesis; agmatine from L-arginine: step 1/1. Its function is as follows. Catalyzes the biosynthesis of agmatine from arginine. In Shewanella amazonensis (strain ATCC BAA-1098 / SB2B), this protein is Biosynthetic arginine decarboxylase.